Consider the following 219-residue polypeptide: Lipoprotein-releasing system ATP-binding protein LolD (219 aa).

In terms of domain architecture, ABC transporter spans 3–219 (IEARNIRKSF…HMRDGLLFSE (217 aa)). 35–42 (GTSGAGKT) contributes to the ATP binding site.

Belongs to the ABC transporter superfamily. Lipoprotein translocase (TC 3.A.1.125) family. In terms of assembly, the complex is composed of two ATP-binding proteins (LolD) and two transmembrane proteins (LolC and LolE).

The protein resides in the cell inner membrane. Its function is as follows. Part of the ABC transporter complex LolCDE involved in the translocation of mature outer membrane-directed lipoproteins, from the inner membrane to the periplasmic chaperone, LolA. Responsible for the formation of the LolA-lipoprotein complex in an ATP-dependent manner. The polypeptide is Lipoprotein-releasing system ATP-binding protein LolD (Porphyromonas gingivalis (strain ATCC BAA-308 / W83)).